Consider the following 635-residue polypeptide: Threonine--tRNA ligase (635 aa).

Positions 1–61 (MINISFPDGS…DNDCKLRILT (61 aa)) constitute a TGS domain. Residues 242–533 (DHRKLGRELD…LIEEYAGRFP (292 aa)) are catalytic. Zn(2+) contacts are provided by cysteine 333, histidine 384, and histidine 510.

It belongs to the class-II aminoacyl-tRNA synthetase family. As to quaternary structure, homodimer. Zn(2+) is required as a cofactor.

The protein resides in the cytoplasm. The enzyme catalyses tRNA(Thr) + L-threonine + ATP = L-threonyl-tRNA(Thr) + AMP + diphosphate + H(+). Catalyzes the attachment of threonine to tRNA(Thr) in a two-step reaction: L-threonine is first activated by ATP to form Thr-AMP and then transferred to the acceptor end of tRNA(Thr). Also edits incorrectly charged L-seryl-tRNA(Thr). In Rickettsia peacockii (strain Rustic), this protein is Threonine--tRNA ligase.